Here is a 91-residue protein sequence, read N- to C-terminus: Small ribosomal subunit protein uS19 (91 aa).

It belongs to the universal ribosomal protein uS19 family.

Functionally, protein S19 forms a complex with S13 that binds strongly to the 16S ribosomal RNA. In Pseudomonas fluorescens (strain SBW25), this protein is Small ribosomal subunit protein uS19.